We begin with the raw amino-acid sequence, 359 residues long: tRNA-specific 2-thiouridylase MnmA (359 aa).

ATP contacts are provided by residues 9-16 and M35; that span reads GLSGGVDS. The segment at 95 to 97 is interaction with target base in tRNA; it reads NPD. C100 (nucleophile) is an active-site residue. C100 and C197 are disulfide-bonded. ATP is bound at residue G124. The interval 147–149 is interaction with tRNA; the sequence is KDQ. The active-site Cysteine persulfide intermediate is the C197. Residues 309–310 are interaction with tRNA; sequence RY.

The protein belongs to the MnmA/TRMU family.

The protein resides in the cytoplasm. The enzyme catalyses S-sulfanyl-L-cysteinyl-[protein] + uridine(34) in tRNA + AH2 + ATP = 2-thiouridine(34) in tRNA + L-cysteinyl-[protein] + A + AMP + diphosphate + H(+). In terms of biological role, catalyzes the 2-thiolation of uridine at the wobble position (U34) of tRNA, leading to the formation of s(2)U34. The sequence is that of tRNA-specific 2-thiouridylase MnmA from Cupriavidus metallidurans (strain ATCC 43123 / DSM 2839 / NBRC 102507 / CH34) (Ralstonia metallidurans).